The following is a 143-amino-acid chain: UPF0251 protein CA_C3166 (143 aa).

It belongs to the UPF0251 family.

The protein is UPF0251 protein CA_C3166 of Clostridium acetobutylicum (strain ATCC 824 / DSM 792 / JCM 1419 / IAM 19013 / LMG 5710 / NBRC 13948 / NRRL B-527 / VKM B-1787 / 2291 / W).